The following is a 186-amino-acid chain: MVLSEELYTQKEAMLYSQRIAQLSKALWKAVEKDWQQWIKPYDLNINEHHILWISYHLKGASISDVAKFGVMHVSTAFNFSKKLEERGFLKFSKRDDDKRNTYVELTEAGTELIVEMNKNYHNTYHSVLEGSLALKDLYGRFPDFLDVMAVIRNIYGEDFIDIFERSFQHFRDSFDTLEERPTVKG.

Residues 13 to 157 (AMLYSQRIAQ…VMAVIRNIYG (145 aa)) enclose the HTH marR-type domain. A DNA-binding region (H-T-H motif) is located at residues 63 to 86 (ISDVAKFGVMHVSTAFNFSKKLEE).

In terms of assembly, homodimer.

Negative regulator of protease production and sporulation. In Lysinibacillus sphaericus (strain C3-41), this protein is HTH-type transcriptional regulator Hpr.